The sequence spans 416 residues: Counting factor 60 (416 aa).

A signal peptide spans 1–22 (MIKKSALITLFLVSLILGVSLS). Residues Asn-110, Asn-218, Asn-231, Asn-318, and Asn-411 are each glycosylated (N-linked (GlcNAc...) asparagine).

Belongs to the histidine acid phosphatase family. As to quaternary structure, component of the counting factor (CF) complex, which includes cf60, cf50, cf45-1 and ctnA.

Its subcellular location is the secreted. In terms of biological role, cell-counting factor that limits the maximum size of the multicellular structure. Does not possess acid phosphatase activity. Cells with decreased levels of this protein form large groups while cells overexpressing this protein form small groups. This Dictyostelium discoideum (Social amoeba) protein is Counting factor 60 (cf60).